The chain runs to 155 residues: MKIWIDADACPRVIKEIVFRASERLRIPVCLVANKNLAKHATHLVESIVVGEGFDVADDYIADHAAPEDLVITADIPLAARIVAIGGVALDPRGELYTEENVGERLSMRDLMMELREGGLVQGGPSQFSLTDRQRFASSLDRLLTRLIREMRPVS.

It belongs to the UPF0178 family.

This Geobacter metallireducens (strain ATCC 53774 / DSM 7210 / GS-15) protein is UPF0178 protein Gmet_1725.